The sequence spans 543 residues: MAKRIIYNEQARRALERGIDILAESVAVTLGPKGRNVVLEKKFGAPQIINDGVTIAKEIELEDHIENTGVALIRQAASKTNDAAGDGTTTATVLAHAMVKAGLKNVAAGANAITLKKGIDKATDFLVEKIKDHSKPISDSNAIAQCGTIAAGNDEEVGKMIADAMDKVGKEGVISLEEGKSMTTELEVTEGMRFDKGYISPYFATDTERMEAVLDEPYILLTDKKIGLVQDLVPVLEQVAKTGKPLLIIAEDIEKEALATLVVNRLRGVLNVAAVKAPGFGDRRKAMLEDMAVLTNGQLITEDAGLKLENATLDMLGTSRRVTINKDTSTIVAEGNEVAVNARCEQIKKQMDETDSTYDKEKLQERLAKLSGGVAVVKVGAATETEMKDKKLRLEDAINATKAAVEEGIVPGGGTTLAHLAPALEDWSSTNLSGEELIGANIVEAALTSPLMRIAENAGANGAVVAENVKSKPVNDGYNAATGEYVDMLSAGIVDPAKVTRSGLQNAASIAGMVLTTECIVADLPEKKDSSPAGGGMGGDFDY.

ATP-binding positions include 29 to 32, 86 to 90, Gly-413, 479 to 481, and Asp-495; these read TLGP, DGTTT, and NAA.

It belongs to the chaperonin (HSP60) family. As to quaternary structure, forms a cylinder of 14 subunits composed of two heptameric rings stacked back-to-back. Interacts with the co-chaperonin GroES.

The protein resides in the cytoplasm. The catalysed reaction is ATP + H2O + a folded polypeptide = ADP + phosphate + an unfolded polypeptide.. Its function is as follows. Together with its co-chaperonin GroES, plays an essential role in assisting protein folding. The GroEL-GroES system forms a nano-cage that allows encapsulation of the non-native substrate proteins and provides a physical environment optimized to promote and accelerate protein folding. This chain is Chaperonin GroEL 2, found in Prochlorococcus marinus (strain NATL1A).